Consider the following 325-residue polypeptide: Tetraacyldisaccharide 4'-kinase (325 aa).

55–62 is an ATP binding site; sequence TAGGNGKT.

It belongs to the LpxK family.

The enzyme catalyses a lipid A disaccharide + ATP = a lipid IVA + ADP + H(+). It participates in glycolipid biosynthesis; lipid IV(A) biosynthesis; lipid IV(A) from (3R)-3-hydroxytetradecanoyl-[acyl-carrier-protein] and UDP-N-acetyl-alpha-D-glucosamine: step 6/6. Its function is as follows. Transfers the gamma-phosphate of ATP to the 4'-position of a tetraacyldisaccharide 1-phosphate intermediate (termed DS-1-P) to form tetraacyldisaccharide 1,4'-bis-phosphate (lipid IVA). The chain is Tetraacyldisaccharide 4'-kinase from Enterobacter sp. (strain 638).